The primary structure comprises 479 residues: Outer membrane protein OprJ (479 aa).

The signal sequence occupies residues 1–19 (MRKPAFGVSALLIALTLGA). The N-palmitoyl cysteine moiety is linked to residue Cys20. Residue Cys20 is the site of S-diacylglycerol cysteine attachment. The disordered stretch occupies residues 102–121 (LNAAATGNRQRQPADLSAGN).

It belongs to the outer membrane factor (OMF) (TC 1.B.17) family.

The protein localises to the cell outer membrane. Channel-forming component of a multidrug resistance efflux pump. In Pseudomonas aeruginosa (strain ATCC 15692 / DSM 22644 / CIP 104116 / JCM 14847 / LMG 12228 / 1C / PRS 101 / PAO1), this protein is Outer membrane protein OprJ (oprJ).